We begin with the raw amino-acid sequence, 832 residues long: MKPPGSSSRQPPLAGCSLAGASCGPQRGPAGSVPASAPARTPPCRLLLVLLLLPPLAASSRPRAWGAAAPSAPHWNETAEKNLGVLADEDNTLQQNSSSNISYSNAMQKEITLPSRLIYYINQDSESPYHVLDTKARHQQKHNKAVHLAQASFQIEAFGSKFILDLILNNGLLSSDYVEIHYENGKPQYSKGGEHCYYHGSIRGVKDSKVALSTCNGLHGMFEDDTFVYMIEPLELVHDEKSTGRPHIIQKTLAGQYSKQMKNLTMERGDQWPFLSELQWLKRRKRAVNPSRGIFEEMKYLELMIVNDHKTYKKHRSSHAHTNNFAKSVVNLVDSIYKEQLNTRVVLVAVETWTEKDQIDITTNPVQMLHEFSKYRQRIKQHADAVHLISRVTFHYKRSSLSYFGGVCSRTRGVGVNEYGLPMAVAQVLSQSLAQNLGIQWEPSSRKPKCDCTESWGGCIMEETGVSHSRKFSKCSILEYRDFLQRGGGACLFNRPTKLFEPTECGNGYVEAGEECDCGFHVECYGLCCKKCSLSNGAHCSDGPCCNNTSCLFQPRGYECRDAVNECDITEYCTGDSGQCPPNLHKQDGYACNQNQGRCYNGECKTRDNQCQYIWGTKAAGSDKFCYEKLNTEGTEKGNCGKDGDRWIQCSKHDVFCGFLLCTNLTRAPRIGQLQGEIIPTSFYHQGRVIDCSGAHVVLDDDTDVGYVEDGTPCGPSMMCLDRKCLQIQALNMSSCPLDSKGKVCSGHGVCSNEATCICDFTWAGTDCSIRDPVRNLHPPKDEGPKGPSATNLIIGSIAGAILVAAIVLGGTGWGFKNVKKRRFDPTQQGPI.

Residues 1–10 (MKPPGSSSRQ) show a composition bias toward polar residues. The tract at residues 1-37 (MKPPGSSSRQPPLAGCSLAGASCGPQRGPAGSVPASA) is disordered. The N-terminal stretch at 1–59 (MKPPGSSSRQPPLAGCSLAGASCGPQRGPAGSVPASAPARTPPCRLLLVLLLLPPLAAS) is a signal peptide. Over residues 28 to 37 (GPAGSVPASA) the composition is skewed to low complexity. The propeptide occupies 60-286 (SRPRAWGAAA…ELQWLKRRKR (227 aa)). Residues Asn76, Asn96, Asn100, and Asn263 are each glycosylated (N-linked (GlcNAc...) asparagine). Topologically, residues 287 to 792 (AVNPSRGIFE…EGPKGPSATN (506 aa)) are extracellular. Residues 299–496 (KYLELMIVND…GGGACLFNRP (198 aa)) form the Peptidase M12B domain. Intrachain disulfides connect Cys408-Cys491, Cys450-Cys475, and Cys452-Cys459. Residues 502–588 (PTECGNGYVE…QCPPNLHKQD (87 aa)) enclose the Disintegrin domain. Asn547 and Asn548 each carry an N-linked (GlcNAc...) asparagine glycan. The cysteines at positions 560 and 580 are disulfide-linked. The tract at residues 563-568 (AVNECD) is may bind the integrin receptor. N-linked (GlcNAc...) asparagine glycans are attached at residues Asn664 and Asn732. The region spanning 732–769 (NMSSCPLDSKGKVCSGHGVCSNEATCICDFTWAGTDCS) is the EGF-like domain. Intrachain disulfides connect Cys736–Cys751, Cys745–Cys757, and Cys759–Cys768. Residues 793 to 813 (LIIGSIAGAILVAAIVLGGTG) traverse the membrane as a helical segment. Residues 814-832 (WGFKNVKKRRFDPTQQGPI) lie on the Cytoplasmic side of the membrane.

As to quaternary structure, can bind to LGI1 and LGI4. Ligand for integrin alpha-V/beta-3. In terms of tissue distribution, highly expressed in the brain and weakly expressed in the heart. In the brain, expressed prominently in the amygdala, caudate nucleus, hypothalamus, thalamus, cerebral cortex and occipital pole.

It is found in the cell membrane. Its subcellular location is the secreted. May play a role in cell-cell and cell-matrix interactions. This is a non-catalytic metalloprotease-like protein. The protein is Disintegrin and metalloproteinase domain-containing protein 23 (ADAM23) of Homo sapiens (Human).